Reading from the N-terminus, the 279-residue chain is Ethanolamine utilization protein EutJ (279 aa).

Belongs to the EutJ family.

Its pathway is amine and polyamine degradation; ethanolamine degradation. Its function is as follows. May protect ethanolamine ammonia-lyase (EAL, eutB-eutC) from inhibition, may function in assembling the bacterial microcompartment and/or in refolding EAL, suggesting it may have chaperone activity. Overexpression of eutJ and eutS in E.coli leads to multiple BMC-like structures; eutS expression alone leads to 1 BMC-like structure per cell. Functionally, expression of the eut operon allows this bacteria to use ethanolamine (EA) as a carbon, nitrogen and energy source. It relies on cobalamin (vitamin B12) both as a cofactor for the ethanolamine ammonia-lyase (EAL) activity and to induce the operon. EA enhances bacterial survival in macrophages in a concentration-dependent manner, suggesting it is an important nutrient during infection. The sequence is that of Ethanolamine utilization protein EutJ from Salmonella typhimurium (strain LT2 / SGSC1412 / ATCC 700720).